Here is a 424-residue protein sequence, read N- to C-terminus: MAKNIQAIRGMNDYLPGETAIWQRIEGTLKNVLGSYGYSEIRLPIVEQTPLFKRAIGEVTDVVEKEMYTFEDRNGDSLTLRPEGTAGCVRAGIEHGLLYNQEQRLWYIGPMFRHERPQKGRYRQFHQLGCEVFGLQGPDIDAELIMLTARWWRALGISEHVTLELNSIGSLEARANYRDALVAFLEQYKDKLDEDCKRRMYTNPLRVLDSKNPEVQALLNDAPALGDYLDEESREHFAGLCKLLESAGIAYTVNQRLVRGLDYYNRTVFEWVTNSLGSQGTVCAGGRYDGLVEQLGGRATPAVGFAMGLERLVLLVQAVNPEFKADPVVDIYLVASGADTQSAAMALAERLRDELPGVKLMTNHGGGNFKKQFARADKWGARVAVVLGESEVANGTAVVKDLRSGEQTAVAQDSVAAHLRTLLG.

The protein belongs to the class-II aminoacyl-tRNA synthetase family. As to quaternary structure, homodimer.

Its subcellular location is the cytoplasm. It carries out the reaction tRNA(His) + L-histidine + ATP = L-histidyl-tRNA(His) + AMP + diphosphate + H(+). This Escherichia coli (strain SE11) protein is Histidine--tRNA ligase.